Consider the following 814-residue polypeptide: Exostosin-like-3 homolog (814 aa).

Over 1 to 14 (MAIKLNGSSRSFVP) the chain is Cytoplasmic. Residues 15 to 35 (SLRVSAFLIFIFFVITYIIIY) traverse the membrane as a helical; Signal-anchor for type II membrane protein segment. N-linked (GlcNAc...) asparagine glycans are attached at residues Asn36, Asn227, Asn297, Asn322, Asn454, and Asn492. The Lumenal segment spans residues 36–814 (NVSFSEPSWI…QNHQKCFKYV (779 aa)). Residues Arg570, Asn595, Asn620, Arg625, Asp641, Asp642, and Asp643 each contribute to the UDP-N-acetyl-alpha-D-glucosamine site. Mn(2+) is bound at residue Asp643. A glycan (N-linked (GlcNAc...) asparagine) is linked at Asn685. A disulfide bridge connects residues Cys726 and Cys774. Positions 727, 728, and 771 each coordinate UDP-N-acetyl-alpha-D-glucosamine. The active site involves Asp728.

This sequence belongs to the glycosyltransferase 47 family. Interacts with rib-1. It depends on Mn(2+) as a cofactor.

The protein localises to the endoplasmic reticulum membrane. It localises to the golgi apparatus membrane. It catalyses the reaction 3-O-(beta-D-GlcA-(1-&gt;3)-beta-D-Gal-(1-&gt;3)-beta-D-Gal-(1-&gt;4)-beta-D-Xyl)-L-seryl-[protein] + UDP-N-acetyl-alpha-D-glucosamine = 3-O-(alpha-D-GlcNAc-(1-&gt;4)-beta-D-GlcA-(1-&gt;3)-beta-D-Gal-(1-&gt;3)-beta-D-Gal-(1-&gt;4)-beta-D-Xyl)-L-seryl-[protein] + UDP + H(+). It carries out the reaction 3-O-{[(1-&gt;4)-beta-D-GlcA-(1-&gt;4)-alpha-D-GlcNAc](n)-(1-&gt;4)-beta-D-GlcA-(1-&gt;3)-beta-D-Gal-(1-&gt;3)-beta-D-Gal-(1-&gt;4)-beta-D-Xyl}-L-seryl-[protein] + UDP-N-acetyl-alpha-D-glucosamine = 3-O-{alpha-D-GlcNAc-[(1-&gt;4)-beta-D-GlcA-(1-&gt;4)-alpha-D-GlcNAc](n)-(1-&gt;4)-beta-D-GlcA-(1-&gt;3)-beta-D-Gal-(1-&gt;3)-beta-D-Gal-(1-&gt;4)-beta-D-Xyl}-L-seryl-[protein] + UDP + H(+). The catalysed reaction is 3-O-{alpha-D-GlcNAc-[(1-&gt;4)-beta-D-GlcA-(1-&gt;4)-alpha-D-GlcNAc](n)-(1-&gt;4)-beta-D-GlcA-(1-&gt;3)-beta-D-Gal-(1-&gt;3)-beta-D-Gal-(1-&gt;4)-beta-D-Xyl}-L-seryl-[protein] + UDP-alpha-D-glucuronate = 3-O-{[(1-&gt;4)-beta-D-GlcA-(1-&gt;4)-alpha-D-GlcNAc](n+1)-(1-&gt;4)-beta-D-GlcA-(1-&gt;3)-beta-D-Gal-(1-&gt;3)-beta-D-Gal-(1-&gt;4)-beta-D-Xyl}-L-seryl-[protein] + UDP + H(+). The protein operates within glycan metabolism; heparan sulfate biosynthesis. With respect to regulation, binding to rib-1 is required for GlcAT-II activity and for increasing GlcNAc-II activity in vitro. In terms of biological role, glycosyltransferase required for the biosynthesis of heparan sulfate. Initiates heparan sulfate synthesis by transferring GlcNAc to the (GlcA-Gal-Gal-Xyl-)Ser core linker (GlcNAcT-I activity). In association with rib-1, is also responsible for the alternating addition of beta-1-4-linked glucuronic acid (GlcA) and alpha-1-4-linked N-acetylglucosamine (GlcNAc) units to nascent heparan sulfate chains (GlcNAcT-II and GlcAT-II activities). Required for normal ventral epidermal enclosure during the early stages of embryonic development. In addition, involved in the elongation of the pharyngeal isthmus during the later stages of embryonic development. Involved in the directed migration of hermaphrodite-specific neurons. The protein is Exostosin-like-3 homolog (rib-2) of Caenorhabditis elegans.